The primary structure comprises 302 residues: RING-H2 finger protein ATL38 (302 aa).

Residues 15 to 35 (LLVITIILFAIFIVGLASVCF) traverse the membrane as a helical segment. The RING-type; atypical zinc-finger motif lies at 96 to 138 (CAVCICEFEDHETLRLMPECCHVFHADCVSVWLSDHSTCPLCR). Positions 279–302 (GEAVAPSKDSRRISVEQSQLDDRV) are disordered. The segment covering 286–302 (KDSRRISVEQSQLDDRV) has biased composition (basic and acidic residues).

The protein belongs to the RING-type zinc finger family. ATL subfamily.

Its subcellular location is the membrane. The enzyme catalyses S-ubiquitinyl-[E2 ubiquitin-conjugating enzyme]-L-cysteine + [acceptor protein]-L-lysine = [E2 ubiquitin-conjugating enzyme]-L-cysteine + N(6)-ubiquitinyl-[acceptor protein]-L-lysine.. It participates in protein modification; protein ubiquitination. The polypeptide is RING-H2 finger protein ATL38 (ATL38) (Arabidopsis thaliana (Mouse-ear cress)).